Consider the following 313-residue polypeptide: Acetaldehyde dehydrogenase (313 aa).

Residue 12–15 (SGNI) coordinates NAD(+). C132 acts as the Acyl-thioester intermediate in catalysis. NAD(+)-binding positions include 163–171 (SAGPGTRAN) and N291.

The protein belongs to the acetaldehyde dehydrogenase family.

It carries out the reaction acetaldehyde + NAD(+) + CoA = acetyl-CoA + NADH + H(+). The polypeptide is Acetaldehyde dehydrogenase (bphG) (Burkholderia cepacia (Pseudomonas cepacia)).